Consider the following 283-residue polypeptide: N-terminal Xaa-Pro-Lys N-methyltransferase 2 (283 aa).

Residues Gly124, Arg129, Asp146, 174-175, and Gln190 each bind S-adenosyl-L-methionine; that span reads LQ.

Belongs to the methyltransferase superfamily. NTM1 family.

It localises to the nucleus. The enzyme catalyses N-terminal L-alanyl-L-prolyl-L-lysyl-[protein] + S-adenosyl-L-methionine = N-terminal N-methyl-L-alanyl-L-prolyl-L-lysyl-[protein] + S-adenosyl-L-homocysteine + H(+). It carries out the reaction N-terminal L-prolyl-L-prolyl-L-lysyl-[protein] + S-adenosyl-L-methionine = N-terminal N-methyl-L-prolyl-L-prolyl-L-lysyl-[protein] + S-adenosyl-L-homocysteine + H(+). The catalysed reaction is N-terminal L-seryl-L-prolyl-L-lysyl-[protein] + S-adenosyl-L-methionine = N-terminal N-methyl-L-seryl-L-prolyl-L-lysyl-[protein] + S-adenosyl-L-homocysteine + H(+). Alpha N-methyltransferase that methylates the N-terminus of target proteins containing the N-terminal motif [Ala/Pro/Ser]-Pro-Lys when the initiator Met is cleaved. Specifically catalyzes monomethylation of exposed alpha-amino group of Ala or Ser residue in the [Ala/Ser]-Pro-Lys motif and Pro in the Pro-Pro-Lys motif. Predominantly functions as a mono-methyltransferase but is also able to di-/tri-methylate the GPKRIA peptide and di-methylate the PPKRIA peptide (in vitro). May activate NTMT1 by priming its substrates for trimethylation. This chain is N-terminal Xaa-Pro-Lys N-methyltransferase 2 (Ntmt2), found in Mus musculus (Mouse).